The chain runs to 119 residues: Large ribosomal subunit protein bL19 (119 aa).

It belongs to the bacterial ribosomal protein bL19 family.

Functionally, this protein is located at the 30S-50S ribosomal subunit interface and may play a role in the structure and function of the aminoacyl-tRNA binding site. The protein is Large ribosomal subunit protein bL19 of Petrotoga mobilis (strain DSM 10674 / SJ95).